Reading from the N-terminus, the 222-residue chain is Glutathione S-transferase A5 (222 aa).

At Ala2 the chain carries N-acetylalanine. One can recognise a GST N-terminal domain in the interval 3 to 83 (EKPKLHYSNA…YIASKYNLYG (81 aa)). Position 4 is an N6-succinyllysine (Lys4). Residues Tyr9, Arg45, 54–55 (QV), and 67–68 (QT) each bind glutathione. The GST C-terminal domain occupies 85-208 (DMKERALIDM…QPGSQRKPPM (124 aa)).

It belongs to the GST superfamily. Alpha family. As to quaternary structure, homodimer. Expression not detected.

It localises to the cytoplasm. It carries out the reaction RX + glutathione = an S-substituted glutathione + a halide anion + H(+). The polypeptide is Glutathione S-transferase A5 (GSTA5) (Homo sapiens (Human)).